The following is a 685-amino-acid chain: Mitotic interactor and substrate of PLK1 (685 aa).

Residue Ser78 is modified to Phosphoserine; by CDK1. 2 disordered regions span residues 155–181 (SGTVATLQAAPDHGDPRTPGPPRSTPL) and 207–253 (NKEV…QGKG). Position 172 is a phosphothreonine; by CDK1 (Thr172). At Thr179 the chain carries Phosphothreonine. Phosphoserine; by CDK1 is present on Ser214. Thr219 is modified (phosphothreonine). A Phosphoserine; by CDK1 modification is found at Ser284. The residue at position 287 (Thr287) is a Phosphothreonine; by CDK1. The segment at 345 to 499 (GRPSLYVQRD…PWKLPRGSPQ (155 aa)) is disordered. Ser348 is modified (phosphoserine). A compositionally biased stretch (basic and acidic residues) spans 355–371 (MVQETQREEDHRREGLH). Thr377 carries the phosphothreonine; by CDK1 modification. Ser382 carries the post-translational modification Phosphoserine. Positions 392 to 417 (ALSSDSILSPDSILSPAPDARAADPA) are enriched in low complexity. Ser394, Ser395, and Ser397 each carry phosphoserine; by PLK1. A phosphoserine mark is found at Ser406 and Ser436. Residues 454-469 (SGLSTVDTEAATSPKA) show a composition bias toward polar residues. Phosphoserine; by PLK1 is present on Ser477. Over residues 478–488 (ESSGKPMSTKQ) the composition is skewed to polar residues. Phosphoserine is present on residues Ser547 and Ser549. A coiled-coil region spans residues 551-575 (DLLERERESVLRREREVAEERRNAL). 2 disordered regions span residues 575-607 (LFPEVFSPTPDESCDQNSRSSSQASGITGSYSV) and 629-651 (PVDSAPPGQRKKEQWYAGINPSD). Ser581 is subject to Phosphoserine; by PLK1. Thr583 bears the Phosphothreonine mark. Over residues 589–607 (DQNSRSSSQASGITGSYSV) the composition is skewed to polar residues. Position 592 is a phosphoserine; by PLK1 (Ser592). Position 681 is a phosphoserine (Ser681).

Belongs to the MISP family. Associates with F-actin. Interacts with DCTN1; this interaction regulates DCTN1 distribution at the cell cortex. Interacts with PTK2/FAK and MAPRE1. Phosphorylated by CDK1 and PLK1. CDK1 is the priming kinase for PLK1 phosphorylation. Phosphorylation by PLK1 is required for proper spindle orientation at metaphase.

The protein localises to the cell junction. It localises to the focal adhesion. Its subcellular location is the cytoplasm. It is found in the cytoskeleton. The protein resides in the cell cortex. Its function is as follows. Plays a role in mitotic spindle orientation and mitotic progression. Regulates the distribution of dynactin at the cell cortex in a PLK1-dependent manner, thus stabilizing cortical and astral microtubule attachments required for proper mitotic spindle positioning. May link microtubules to the actin cytospkeleton and focal adhesions. May be required for directed cell migration and centrosome orientation. May also be necessary for proper stacking of the Golgi apparatus. The sequence is that of Mitotic interactor and substrate of PLK1 from Pongo abelii (Sumatran orangutan).